Here is a 159-residue protein sequence, read N- to C-terminus: Aspartate carbamoyltransferase regulatory chain (159 aa).

The Zn(2+) site is built by Cys-113, Cys-118, Cys-142, and Cys-145.

Belongs to the PyrI family. As to quaternary structure, contains catalytic and regulatory chains. Requires Zn(2+) as cofactor.

In terms of biological role, involved in allosteric regulation of aspartate carbamoyltransferase. This is Aspartate carbamoyltransferase regulatory chain from Saccharolobus islandicus (strain Y.N.15.51 / Yellowstone #2) (Sulfolobus islandicus).